The sequence spans 446 residues: Exodeoxyribonuclease 7 large subunit (446 aa).

The protein belongs to the XseA family. In terms of assembly, heterooligomer composed of large and small subunits.

It is found in the cytoplasm. The enzyme catalyses Exonucleolytic cleavage in either 5'- to 3'- or 3'- to 5'-direction to yield nucleoside 5'-phosphates.. Functionally, bidirectionally degrades single-stranded DNA into large acid-insoluble oligonucleotides, which are then degraded further into small acid-soluble oligonucleotides. The chain is Exodeoxyribonuclease 7 large subunit from Xanthomonas campestris pv. campestris (strain 8004).